A 529-amino-acid chain; its full sequence is uncharacterized protein (529 aa).

D389 (nucleophile) is an active-site residue. E392 is an active-site residue. D459 acts as the Proton donor in catalysis.

It belongs to the glycosyl hydrolase 31 family.

This is an uncharacterized protein from Pseudescherichia vulneris (Escherichia vulneris).